The chain runs to 394 residues: Elongation factor Tu (394 aa).

The 196-residue stretch at 10 to 205 (KPHMNVGTIG…SMDNYFDLPE (196 aa)) folds into the tr-type G domain. The tract at residues 19–26 (GHVDHGKT) is G1. Position 19–26 (19–26 (GHVDHGKT)) interacts with GTP. Thr-26 lines the Mg(2+) pocket. The G2 stretch occupies residues 61-65 (GITIN). Residues 82 to 85 (DCPG) are G3. GTP-binding positions include 82–86 (DCPGH) and 137–140 (NKLD). The tract at residues 137–140 (NKLD) is G4. The interval 173–175 (SAF) is G5.

The protein belongs to the TRAFAC class translation factor GTPase superfamily. Classic translation factor GTPase family. EF-Tu/EF-1A subfamily. In terms of assembly, monomer.

Its subcellular location is the cytoplasm. It carries out the reaction GTP + H2O = GDP + phosphate + H(+). In terms of biological role, GTP hydrolase that promotes the GTP-dependent binding of aminoacyl-tRNA to the A-site of ribosomes during protein biosynthesis. This Borreliella afzelii (strain PKo) (Borrelia afzelii) protein is Elongation factor Tu.